A 515-amino-acid polypeptide reads, in one-letter code: Maturase K (515 aa).

Belongs to the intron maturase 2 family. MatK subfamily.

Its subcellular location is the plastid. The protein resides in the chloroplast. Usually encoded in the trnK tRNA gene intron. Probably assists in splicing its own and other chloroplast group II introns. This Pinus contorta (Shore pine) protein is Maturase K.